The primary structure comprises 285 residues: HTH-type transcriptional regulator MurR (285 aa).

The region spanning 1–77 (MLYLTKISNA…MALIGEYSAS (77 aa)) is the HTH rpiR-type domain. The H-T-H motif DNA-binding region spans 37–56 (SRQMAKQLGISQSSIVKFAQ). One can recognise an SIS domain in the interval 128-268 (IIDVISKAQF…FVGLVQLNDV (141 aa)).

As to quaternary structure, homotetramer.

The protein operates within amino-sugar metabolism; N-acetylmuramate degradation [regulation]. Functionally, represses the expression of the murPQ operon involved in the uptake and degradation of N-acetylmuramic acid (MurNAc). Binds to two adjacent inverted repeats within the operator region. MurNAc 6-phosphate, the substrate of MurQ, is the specific inducer that weakens binding of MurR to the operator. The chain is HTH-type transcriptional regulator MurR from Escherichia coli (strain B / BL21-DE3).